A 541-amino-acid chain; its full sequence is Forkhead box protein O (541 aa).

The segment covering Asn-118–Pro-150 has biased composition (polar residues). Disordered regions lie at residues Asn-118–Thr-168 and Trp-252–Lys-291. The fork-head DNA-binding region spans Trp-175 to Arg-268. Phosphothreonine is present on Thr-273. Ser-319 bears the Phosphoserine; by CaMK2 mark.

Interacts with rle-1. Interacts with unc-43 and tax-6. Interacts with jnk-1. Interacts with ftt-2. Interacts with prmt-1. Interacts with hcf-1. Post-translationally, phosphorylated by akt-1 and/or akt-2. Phosphorylated by sgk-1. Phosphorylated by unc-43. Phosphorylated by jnk-1. Dephosphorylated by tax-6 in vitro. Ubiquitinated. Ubiquitination by rle-1 leads to proteasome-mediated degradation. In terms of processing, methylation by prmt-1 prevents phosphorylation and promotes translocation to the nucleus to allow for daf-16-dependent transcription. Isoform b and isoform c are expressed in ectoderm, muscles, intestine and neurons. Isoform b is also expressed in the pharynx. The intestine appears to be the primary site of longevity function.

Its subcellular location is the nucleus. It is found in the cytoplasm. Its function is as follows. Forkhead-type transcription factor. Binds to the promoters of genes that contain the daf-16/FOXO binding element (DBE), TTGTTTAC, in their regulatory region. Functions in the Insulin/IGF-1-like signaling (IIS) mediated pathway which affects lipogenesis, lifespan, starvation survival, heat shock and oxidative stress responses, sleep, associative memory, and dauer formation. Longevity signaling predominantly arises from expression in the intestine. Acts in the intestine to mediate the role of slo-1 in age-associated decline in motor activity and longevity. Transcriptional activity of daf-16/FOXO is negatively regulated by interaction with host cell factor homolog hcf-1; and by cytoplasmic sequestration by association with ftt-2. Inhibition is required for the carbon dioxide (CO2) avoidance response. Upon loss of inhibition, daf-16 translocates to the nucleus to regulate genes that result in delayed reproduction and growth while increasing stress resistance starvation tolerance and longevity. Association with arginine methyltransferase prmt-1 prevents phosphorylation and allows for translocation to the nucleus and the subsequent transcription of longevity-related genes. Modulation of its activity by cGMP levels in sensory neurons regulates lifespan. Has a protective role against muscle dystrophy. Involved in mediating protection against aberrant protein aggregation proteotoxicity. Influences transcription of genes that code for proteins involved in immunity as part of a general stress response. Targets genes that inhibit and stimulate tumor growth. Targets kinases, phosphatases and transcription factors that are primarily involved in signaling and gene regulation. Thought to regulate ins-7 in FOXO-to-FOXO signaling, which coordinates daf-16 expression. Activity is positively regulated by shc-1-mediated inhibition of daf-2 and activation of JNK pathway. Through the regulation of its activity by shc-1-mediated inhibition of daf-2 and activation of JNK pathway, plays a role in maintaining the integrity of the gonad. Functions by indirect interaction with jnk-1 of the mitogen-activated protein kinase (MAPK) pathway. Involved in increased proteasome activity by activating expression of rpn-6.1 in response to proteotoxic stress, leading to enhanced assembly of the 26S proteasome, followed by higher proteasome activity. Also regulates proteasome activity in the intestine by preventing expression of deubiquitinase ubh-4. Represses transcription of natc-1. Involved in regulation of srh-234 expression. Binds to the promoter of the AMPK-gamma regulatory subunit, aakg-4, and activates its transcription. Also activates transcription of AMPK-gamma regulatory subunit, aakg-1. Maintains endoplasmic reticulum (ER) function by inducing protein degradation and elimination to remove misfolded secretory proteins from the ER independently of the ire-1/xbp-1 unfolded protein response pathway. Regulates epidermal innate immunity to nematophagous fungal infection and physical wounding which trigger bli-3 induced ROS release, leading to daf-16 activation independently of daf-2 signaling. May negatively regulate resistance to stress caused by oxidized cholesterol adducts by preventing the activation of daf-9 and nuclear hormone receptor daf-12, two members of the steroid signaling pathway. Promotes apoptosis during embryonic development. Probably through the regulation of the autophagy genes atg-18 and atg-16.2, plays a role in regulating stem cell number in the germline during larval development. Plays a role in learning and memory; including associative memory, and aversive gustatory associated learning known as salt avoidance learning. Plays a role in regulating gene transcription in response to white light exposure. Binds to the promoter of dex-1 to positively regulate its expression in seam cells during the dauer phase. Plays a role in transgenerational lipid accumulation in response to a high-fat diet. Functionally, functions in the Insulin/IGF-1-like signaling (IIS) mediated pathway. May play a role in lifespan modulation, but less significant than that played by isoforms d and f. Functions in the Insulin/IGF-1-like signaling (IIS) mediated pathway. Transcript level in the early adult may play a role in lifespan modulation, but effect is more significant than that played by isoform a. The chain is Forkhead box protein O from Caenorhabditis elegans.